Here is a 44-residue protein sequence, read N- to C-terminus: Large ribosomal subunit protein bL34 (44 aa).

The protein belongs to the bacterial ribosomal protein bL34 family.

This is Large ribosomal subunit protein bL34 from Buchnera aphidicola subsp. Cinara cedri (strain Cc).